A 153-amino-acid polypeptide reads, in one-letter code: Insulin-like growth factor 1 (153 aa).

Residues 49 to 77 (GPETLCGAELVDALQFVCGPRGFYFNKPT) are b. 3 disulfide bridges follow: Cys-54-Cys-96, Cys-66-Cys-109, and Cys-95-Cys-100. The tract at residues 78 to 89 (GYGSSIRRAPQT) is c. Positions 90–110 (GIVDECCFRSCDLRRLEMYCA) are a. The d stretch occupies residues 111-118 (PLKPTKAA). Positions 119 to 153 (RSIRAQRHTDMPKTQKEVHLKNTSRGSAGNKTYRM) are cleaved as a propeptide — e peptide. A disordered region spans residues 120 to 153 (SIRAQRHTDMPKTQKEVHLKNTSRGSAGNKTYRM). Over residues 125-138 (RHTDMPKTQKEVHL) the composition is skewed to basic and acidic residues. The span at 139–153 (KNTSRGSAGNKTYRM) shows a compositional bias: polar residues.

The protein belongs to the insulin family. In terms of assembly, forms a ternary complex with IGFR1 and ITGAV:ITGB3. Forms a ternary complex with IGFR1 and ITGA6:ITGB4. Interacts with SH2D3C isoform 2. Forms a ternary complex with IGFBP3 and ALS.

The protein resides in the secreted. Functionally, the insulin-like growth factors, isolated from plasma, are structurally and functionally related to insulin but have a much higher growth-promoting activity. May be a physiological regulator of [1-14C]-2-deoxy-D-glucose (2DG) transport and glycogen synthesis in osteoblasts. Stimulates glucose transport in bone-derived osteoblastic (PyMS) cells and is effective at much lower concentrations than insulin, not only regarding glycogen and DNA synthesis but also with regard to enhancing glucose uptake. May play a role in synapse maturation. Ca(2+)-dependent exocytosis of IGF1 is required for sensory perception of smell in the olfactory bulb. Acts as a ligand for IGF1R. Binds to the alpha subunit of IGF1R, leading to the activation of the intrinsic tyrosine kinase activity which autophosphorylates tyrosine residues in the beta subunit thus initiating a cascade of down-stream signaling events leading to activation of the PI3K-AKT/PKB and the Ras-MAPK pathways. Binds to integrins ITGAV:ITGB3 and ITGA6:ITGB4. Its binding to integrins and subsequent ternary complex formation with integrins and IGFR1 are essential for IGF1 signaling. Induces the phosphorylation and activation of IGFR1, MAPK3/ERK1, MAPK1/ERK2 and AKT1. As part of the MAPK/ERK signaling pathway, acts as a negative regulator of apoptosis in cardiomyocytes via promotion of STUB1/CHIP-mediated ubiquitination and degradation of ICER-type isoforms of CREM. This Mus musculus (Mouse) protein is Insulin-like growth factor 1.